Reading from the N-terminus, the 417-residue chain is Riboflavin biosynthesis protein RibBA (417 aa).

Residues M1–K204 form a DHBP synthase region. D-ribulose 5-phosphate-binding positions include R28 to E29, D33, R141 to T145, and E165. E29 is a Mg(2+) binding site. H144 contributes to the Mg(2+) binding site. The GTP cyclohydrolase II stretch occupies residues H205 to L417. Residue R259–E263 coordinates GTP. Zn(2+)-binding residues include C264, C275, and C277. GTP contacts are provided by residues Q280, E303–R305, and T325. Residue D337 is the Proton acceptor; for GTP cyclohydrolase activity of the active site. The Nucleophile; for GTP cyclohydrolase activity role is filled by R339. Positions 360 and 365 each coordinate GTP.

In the N-terminal section; belongs to the DHBP synthase family. It in the C-terminal section; belongs to the GTP cyclohydrolase II family. Mg(2+) serves as cofactor. The cofactor is Mn(2+). It depends on Zn(2+) as a cofactor.

It carries out the reaction D-ribulose 5-phosphate = (2S)-2-hydroxy-3-oxobutyl phosphate + formate + H(+). The catalysed reaction is GTP + 4 H2O = 2,5-diamino-6-hydroxy-4-(5-phosphoribosylamino)-pyrimidine + formate + 2 phosphate + 3 H(+). The protein operates within cofactor biosynthesis; riboflavin biosynthesis; 2-hydroxy-3-oxobutyl phosphate from D-ribulose 5-phosphate: step 1/1. It participates in cofactor biosynthesis; riboflavin biosynthesis; 5-amino-6-(D-ribitylamino)uracil from GTP: step 1/4. Its function is as follows. Catalyzes the conversion of D-ribulose 5-phosphate to formate and 3,4-dihydroxy-2-butanone 4-phosphate. Functionally, catalyzes the conversion of GTP to 2,5-diamino-6-ribosylamino-4(3H)-pyrimidinone 5'-phosphate (DARP), formate and pyrophosphate. This is Riboflavin biosynthesis protein RibBA from Rhodococcus jostii (strain RHA1).